The sequence spans 447 residues: Tubulin beta chain (447 aa).

8 residues coordinate GTP: glutamine 11, glutamate 69, serine 138, glycine 142, threonine 143, glycine 144, asparagine 204, and asparagine 226. Mg(2+) is bound at residue glutamate 69. Residues 425–447 (YQEASISEGEEEYDEEAPLEAEE) form a disordered region. Over residues 432-447 (EGEEEYDEEAPLEAEE) the composition is skewed to acidic residues.

Belongs to the tubulin family. Dimer of alpha and beta chains. A typical microtubule is a hollow water-filled tube with an outer diameter of 25 nm and an inner diameter of 15 nM. Alpha-beta heterodimers associate head-to-tail to form protofilaments running lengthwise along the microtubule wall with the beta-tubulin subunit facing the microtubule plus end conferring a structural polarity. Microtubules usually have 13 protofilaments but different protofilament numbers can be found in some organisms and specialized cells. It depends on Mg(2+) as a cofactor.

The protein localises to the cytoplasm. It localises to the cytoskeleton. Functionally, tubulin is the major constituent of microtubules, a cylinder consisting of laterally associated linear protofilaments composed of alpha- and beta-tubulin heterodimers. Microtubules grow by the addition of GTP-tubulin dimers to the microtubule end, where a stabilizing cap forms. Below the cap, tubulin dimers are in GDP-bound state, owing to GTPase activity of alpha-tubulin. In Phaeosphaeria nodorum (strain SN15 / ATCC MYA-4574 / FGSC 10173) (Glume blotch fungus), this protein is Tubulin beta chain (tubB).